The chain runs to 301 residues: GTPase Era (301 aa).

One can recognise an Era-type G domain in the interval 7–175 (YCGFIAIVGR…AGIVRKHLPE (169 aa)). The G1 stretch occupies residues 15 to 22 (GRPNVGKS). 15–22 (GRPNVGKS) contributes to the GTP binding site. A G2 region spans residues 41-45 (QTTRH). Residues 62–65 (DTPG) form a G3 region. GTP-binding positions include 62–66 (DTPGL) and 124–127 (NKVD). Residues 124 to 127 (NKVD) are G4. The segment at 154 to 156 (ISA) is G5. The region spanning 206–283 (LGAELPYSVT…HLELWVKVKS (78 aa)) is the KH type-2 domain.

It belongs to the TRAFAC class TrmE-Era-EngA-EngB-Septin-like GTPase superfamily. Era GTPase family. In terms of assembly, monomer.

It localises to the cytoplasm. Its subcellular location is the cell inner membrane. Its function is as follows. An essential GTPase that binds both GDP and GTP, with rapid nucleotide exchange. Plays a role in 16S rRNA processing and 30S ribosomal subunit biogenesis and possibly also in cell cycle regulation and energy metabolism. In Salmonella heidelberg (strain SL476), this protein is GTPase Era.